The chain runs to 256 residues: uncharacterized protein (256 aa).

The N-terminal stretch at 1 to 24 is a signal peptide; the sequence is MIKRVNKLVLGISFLFLIISIFAG. The N-palmitoyl cysteine moiety is linked to residue C25. C25 carries the S-diacylglycerol cysteine lipid modification.

This sequence belongs to the staphylococcal tandem lipoprotein family.

The protein localises to the cell membrane. This is an uncharacterized protein from Staphylococcus aureus (strain Mu50 / ATCC 700699).